The primary structure comprises 200 residues: MEALSQIEGRAIPYGAKNVDTDVIVPAHWLKTITREGLGRGAFETLREVPDNIFDSEEFAGAPILIAGDNFGCGSSREHAAWALLDLGIRAVIAPSFSDIFSSNAFKNGIVTVVLSQYEVDRLMEVAQSDPIAVDLETQTVVTPFQDRFPFEIDPFRKHCLLNGLDEVGLTLTRDAAIADYESRQKTQTPWLTTGTERAA.

Belongs to the LeuD family. LeuD type 1 subfamily. In terms of assembly, heterodimer of LeuC and LeuD.

The enzyme catalyses (2R,3S)-3-isopropylmalate = (2S)-2-isopropylmalate. It participates in amino-acid biosynthesis; L-leucine biosynthesis; L-leucine from 3-methyl-2-oxobutanoate: step 2/4. Its function is as follows. Catalyzes the isomerization between 2-isopropylmalate and 3-isopropylmalate, via the formation of 2-isopropylmaleate. This chain is 3-isopropylmalate dehydratase small subunit, found in Erythrobacter litoralis (strain HTCC2594).